The sequence spans 771 residues: Caldesmon (771 aa).

Disordered stretches follow at residues 23-91 and 104-599; these read ERLS…ALLE and LQEA…FSPK. The myosin and calmodulin-binding stretch occupies residues 26–199; that stretch reads SYQRNDDDEE…PKEVPTEENQ (174 aa). Residue Tyr-27 is modified to Phosphotyrosine. Composition is skewed to basic and acidic residues over residues 47–67, 104–115, 139–155, 170–194, 203–215, 240–435, 442–484, 509–518, and 525–592; these read QERL…EKSE, LQEALERQKEFD, ITGK…RCEI, WRQD…KEVP, AVEK…EVVE, AADK…ESLP, SKKD…RELT, GSEKLKEKQQ, and DELK…EKKP. 10 tandem repeats follow at residues 251–265, 266–278, 279–291, 294–306, 309–321, 324–336, 337–349, 350–362, 363–375, and 378–390. Residues 251–390 are 10 X 13 AA approximate tandem repeats; sequence EREKLEAEEK…KRAAEEKARL (140 aa). The interval 523 to 580 is tropomyosin-binding; the sequence is ELDELKKRREERRKILEEEEQKKKQEEAERKIREEEEKKRMKEEIERRRAEAAEKRQK. A Phosphoserine; by CDK1 modification is found at Ser-597. The interval 612-644 is strong actin-binding; that stretch reads LNKSAQKSGMKPAHTTAVVSKIDSRLEQYTSAV. A tropomyosin-binding region spans residues 622 to 632; the sequence is KPAHTTAVVSK. Position 640 is a phosphotyrosine (Tyr-640). Positions 674 to 680 are calmodulin-binding; sequence WEKGNVF. The disordered stretch occupies residues 676–771; the sequence is KGNVFSSPGG…NGLRQFEKEP (96 aa). The segment covering 679-691 has biased composition (polar residues); sequence VFSSPGGTGTPNK. Ser-682 carries the post-translational modification Phosphoserine; by CDK1. 2 positions are modified to phosphothreonine; by CDK1: Thr-688 and Thr-711. A Phosphoserine; by CDK1 modification is found at Ser-717. Residues 723–742 show a composition bias toward basic and acidic residues; sequence SDLRPGDVSGKRNLWEKQSV. Residues 726-752 form a weak actin-binding region; sequence RPGDVSGKRNLWEKQSVEKPAASSSKV.

The protein belongs to the caldesmon family. Post-translationally, phosphorylated in non-muscle cells. Phosphorylation by CDK1 during mitosis causes caldesmon to dissociate from microfilaments. Phosphorylation reduces caldesmon binding to actin, myosin, and calmodulin as well as its inhibition of actomyosin ATPase activity. Phosphorylation also occurs in both quiescent and dividing smooth muscle cells with similar effects on the interaction with actin and calmodulin and on microfilaments reorganization. As to expression, high-molecular-weight caldesmon (h-caldesmon) is predominantly expressed in smooth muscles, whereas low-molecular-weight caldesmon (l-caldesmon) is widely distributed in non-muscle tissues and cells. Not expressed in skeletal muscle or heart.

The protein localises to the cytoplasm. It localises to the cytoskeleton. Its subcellular location is the myofibril. The protein resides in the stress fiber. Actin- and myosin-binding protein implicated in the regulation of actomyosin interactions in smooth muscle and nonmuscle cells (could act as a bridge between myosin and actin filaments). Stimulates actin binding of tropomyosin which increases the stabilization of actin filament structure. In muscle tissues, inhibits the actomyosin ATPase by binding to F-actin. This inhibition is attenuated by calcium-calmodulin and is potentiated by tropomyosin. Interacts with actin, myosin, two molecules of tropomyosin and with calmodulin. Also plays an essential role during cellular mitosis and receptor capping. The protein is Caldesmon (CALD1) of Gallus gallus (Chicken).